We begin with the raw amino-acid sequence, 501 residues long: L-lysine transport protein (501 aa).

Helical transmembrane passes span Leu-25–Ile-41, Gly-52–Ala-76, Val-92–Ala-113, Phe-138–Val-155, Ile-174–Trp-191, Gly-214–Tyr-232, Val-247–Thr-269, Trp-292–Cys-316, Gly-340–Leu-362, Leu-377–Ala-393, Leu-424–Ala-440, Leu-447–Thr-463, and Ile-477–Val-495.

The protein belongs to the amino acid-polyamine-organocation (APC) superfamily. Basic amino acid/polyamine antiporter (APA) (TC 2.A.3.2) family.

It is found in the cell membrane. Its function is as follows. Permease that is involved in the transport across the membrane of lysine. This Corynebacterium glutamicum (strain ATCC 13032 / DSM 20300 / JCM 1318 / BCRC 11384 / CCUG 27702 / LMG 3730 / NBRC 12168 / NCIMB 10025 / NRRL B-2784 / 534) protein is L-lysine transport protein (lysI).